The following is a 175-amino-acid chain: 19.0 kDa class II heat shock protein (175 aa).

A sHSP domain is found at 42–165 (DRRAMANTPM…KPRVVEVKVA (124 aa)). The interval 145–175 (TVDKKPPPEPKKPRVVEVKVAGAGEPKGKGK) is disordered. A compositionally biased stretch (basic and acidic residues) spans 146 to 161 (VDKKPPPEPKKPRVVE).

The protein belongs to the small heat shock protein (HSP20) family. In terms of assembly, may form oligomeric structures.

The protein localises to the cytoplasm. This Oryza sativa subsp. japonica (Rice) protein is 19.0 kDa class II heat shock protein (HSP19.0).